Here is a 491-residue protein sequence, read N- to C-terminus: Putative pentatricopeptide repeat-containing protein At1g02420 (491 aa).

PPR repeat units lie at residues 179 to 209 (DTAC…LKHQ), 210 to 244 (FQPD…GLKP), 245 to 279 (DVVT…EETP), 280 to 314 (DVIT…GCYP), 315 to 349 (DVAA…GLSP), 350 to 384 (NATT…ECLP), 385 to 419 (NTQS…GFGS), and 420 to 454 (YSLV…GHRP).

The protein belongs to the PPR family. P subfamily.

This is Putative pentatricopeptide repeat-containing protein At1g02420 from Arabidopsis thaliana (Mouse-ear cress).